The chain runs to 138 residues: Phosphoribosyl-AMP cyclohydrolase (138 aa).

Asp85 is a binding site for Mg(2+). Residue Cys86 participates in Zn(2+) binding. Residues Asp87 and Asp89 each contribute to the Mg(2+) site. Cys102 and Cys109 together coordinate Zn(2+).

The protein belongs to the PRA-CH family. As to quaternary structure, homodimer. Requires Mg(2+) as cofactor. Zn(2+) is required as a cofactor.

The protein resides in the cytoplasm. The enzyme catalyses 1-(5-phospho-beta-D-ribosyl)-5'-AMP + H2O = 1-(5-phospho-beta-D-ribosyl)-5-[(5-phospho-beta-D-ribosylamino)methylideneamino]imidazole-4-carboxamide. It functions in the pathway amino-acid biosynthesis; L-histidine biosynthesis; L-histidine from 5-phospho-alpha-D-ribose 1-diphosphate: step 3/9. In terms of biological role, catalyzes the hydrolysis of the adenine ring of phosphoribosyl-AMP. This Methanothermobacter thermautotrophicus (strain ATCC 29096 / DSM 1053 / JCM 10044 / NBRC 100330 / Delta H) (Methanobacterium thermoautotrophicum) protein is Phosphoribosyl-AMP cyclohydrolase.